The following is a 137-amino-acid chain: Small ribosomal subunit protein uS12 (137 aa).

The segment at 33-57 (KVQTNVSSPQKRGVATRVGTMTPKK) is disordered. The residue at position 102 (Asp102) is a 3-methylthioaspartic acid.

Belongs to the universal ribosomal protein uS12 family. Part of the 30S ribosomal subunit. Contacts proteins S8 and S17. May interact with IF1 in the 30S initiation complex.

In terms of biological role, with S4 and S5 plays an important role in translational accuracy. Interacts with and stabilizes bases of the 16S rRNA that are involved in tRNA selection in the A site and with the mRNA backbone. Located at the interface of the 30S and 50S subunits, it traverses the body of the 30S subunit contacting proteins on the other side and probably holding the rRNA structure together. The combined cluster of proteins S8, S12 and S17 appears to hold together the shoulder and platform of the 30S subunit. In Streptococcus thermophilus (strain CNRZ 1066), this protein is Small ribosomal subunit protein uS12.